The primary structure comprises 696 residues: Methionine synthase reductase (696 aa).

Residues 4–147 (FLLLYATQRG…VVEPWIDGLW (144 aa)) enclose the Flavodoxin-like domain. FMN is bound by residues 10-14 (TQRGQ) and 93-124 (LLGL…QRFY). A hinge region spans residues 166 to 245 (TLSRASDAPL…SSLSIPAVPP (80 aa)). Residues Ser-171 and Ser-188 each carry the phosphoserine modification. Residues 269 to 531 (DPSFQVPISK…PRATNAFHLP (263 aa)) form the FAD-binding FR-type domain. Lys-289 contacts NADP(+). Residues 449 to 452 (RPYS) and 485 to 488 (GVCT) each bind FAD. NADP(+) is bound by residues 608–609 (SR), 622–624 (YVQ), and Asp-657. FAD is bound at residue Trp-695.

As to quaternary structure, forms a multiprotein complex with MMACHC, MMADHC and MTR. Requires FAD as cofactor. The cofactor is FMN.

It localises to the cytoplasm. It catalyses the reaction 2 methylcob(III)alamin-[methionine synthase] + 2 S-adenosyl-L-homocysteine + NADP(+) + H(+) = 2 cob(II)alamin-[methionine synthase] + 2 S-adenosyl-L-methionine + NADPH. It carries out the reaction 2 cob(II)alamin + A + 2 H2O + 2 H(+) = 2 aquacob(III)alamin + AH2. In terms of biological role, key enzyme in methionine and folate homeostasis responsible for the reactivation of methionine synthase (MTR/MS) activity by catalyzing the reductive methylation of MTR-bound cob(II)alamin. Cobalamin (vitamin B12) forms a complex with MTR to serve as an intermediary in methyl transfer reactions that cycles between MTR-bound methylcob(III)alamin and MTR bound-cob(I)alamin forms, and occasional oxidative escape of the cob(I)alamin intermediate during the catalytic cycle leads to the inactive cob(II)alamin species. The processing of cobalamin in the cytosol occurs in a multiprotein complex composed of at least MMACHC, MMADHC, MTRR and MTR which may contribute to shuttle safely and efficiently cobalamin towards MTR in order to produce methionine. Also necessary for the utilization of methyl groups from the folate cycle, thereby affecting transgenerational epigenetic inheritance. Also acts as a molecular chaperone for methionine synthase by stabilizing apoMTR and incorporating methylcob(III)alamin into apoMTR to form the holoenzyme. Also serves as an aquacob(III)alamin reductase by reducing aquacob(III)alamin to cob(II)alamin; this reduction leads to stimulation of the conversion of apoMTR and aquacob(III)alamin to MTR holoenzyme. This chain is Methionine synthase reductase, found in Mus musculus (Mouse).